The sequence spans 238 residues: 2,3-bisphosphoglycerate-dependent phosphoglycerate mutase (238 aa).

Residues 8-15 (RHGQSEWN), 21-22 (TG), R60, 86-89 (ERHY), K97, 113-114 (RR), and 182-183 (GN) contribute to the substrate site. The Tele-phosphohistidine intermediate role is filled by H9. The Proton donor/acceptor role is filled by E86.

The protein belongs to the phosphoglycerate mutase family. BPG-dependent PGAM subfamily. In terms of assembly, homodimer.

It catalyses the reaction (2R)-2-phosphoglycerate = (2R)-3-phosphoglycerate. The protein operates within carbohydrate degradation; glycolysis; pyruvate from D-glyceraldehyde 3-phosphate: step 3/5. Catalyzes the interconversion of 2-phosphoglycerate and 3-phosphoglycerate. The polypeptide is 2,3-bisphosphoglycerate-dependent phosphoglycerate mutase (Pelagibacter ubique (strain HTCC1062)).